Here is a 350-residue protein sequence, read N- to C-terminus: Probable L-aspartate decarboxylase (350 aa).

K206 carries the post-translational modification N6-(pyridoxal phosphate)lysine.

This sequence belongs to the group II decarboxylase family. MfnA subfamily. It depends on pyridoxal 5'-phosphate as a cofactor.

It carries out the reaction L-aspartate + H(+) = beta-alanine + CO2. It participates in cofactor biosynthesis; coenzyme A biosynthesis. Functionally, catalyzes the decarboxylation of L-aspartate to produce beta-alanine. The sequence is that of Probable L-aspartate decarboxylase from Haloarcula marismortui (strain ATCC 43049 / DSM 3752 / JCM 8966 / VKM B-1809) (Halobacterium marismortui).